Reading from the N-terminus, the 156-residue chain is Small ribosomal subunit protein uS7 (156 aa).

It belongs to the universal ribosomal protein uS7 family. As to quaternary structure, part of the 30S ribosomal subunit. Contacts proteins S9 and S11.

Its function is as follows. One of the primary rRNA binding proteins, it binds directly to 16S rRNA where it nucleates assembly of the head domain of the 30S subunit. Is located at the subunit interface close to the decoding center, probably blocks exit of the E-site tRNA. This is Small ribosomal subunit protein uS7 from Synechococcus sp. (strain RCC307).